The following is a 281-amino-acid chain: Succinate dehydrogenase [ubiquinone] iron-sulfur subunit 1, mitochondrial (281 aa).

The transit peptide at 1-25 directs the protein to the mitochondrion; that stretch reads MAAAALLRRSPAARALLSPALSSRL. Residues 26–48 are disordered; that stretch reads VASKPHSSSPAPPPPPSKAGANT. The 93-residue stretch at 49 to 141 folds into the 2Fe-2S ferredoxin-type domain; the sequence is KTFSIYRWDP…ASTISPLPHM (93 aa). Residues C102, C107, and C122 each coordinate [2Fe-2S] cluster. The 4Fe-4S ferredoxin-type domain maps to 184–214; sequence DRAKLDGMYECILCACCSTSCPSYWWNPEEY. The [4Fe-4S] cluster site is built by C194, C197, and C200. C204 provides a ligand contact to [3Fe-4S] cluster. Position 209 (W209) interacts with a ubiquinone. Positions 251 and 257 each coordinate [3Fe-4S] cluster. Residue C261 participates in [4Fe-4S] cluster binding.

Belongs to the succinate dehydrogenase/fumarate reductase iron-sulfur protein family. As to quaternary structure, component of complex II composed of eight subunits in plants: four classical SDH subunits SDH1, SDH2, SDH3 and SDH4 (a flavoprotein (FP), an iron-sulfur protein (IP), and a cytochrome b composed of a large and a small subunit.), as well as four subunits unknown in mitochondria from bacteria and heterotrophic eukaryotes. It depends on [2Fe-2S] cluster as a cofactor. [3Fe-4S] cluster is required as a cofactor. [4Fe-4S] cluster serves as cofactor.

Its subcellular location is the mitochondrion inner membrane. It carries out the reaction a quinone + succinate = fumarate + a quinol. It participates in carbohydrate metabolism; tricarboxylic acid cycle; fumarate from succinate (eukaryal route): step 1/1. Functionally, iron-sulfur protein (IP) subunit of succinate dehydrogenase (SDH) that is involved in complex II of the mitochondrial electron transport chain and is responsible for transferring electrons from succinate to ubiquinone (coenzyme Q). The chain is Succinate dehydrogenase [ubiquinone] iron-sulfur subunit 1, mitochondrial from Oryza sativa subsp. japonica (Rice).